Consider the following 257-residue polypeptide: UPF0246 protein YaaA (257 aa).

It belongs to the UPF0246 family.

In Salmonella arizonae (strain ATCC BAA-731 / CDC346-86 / RSK2980), this protein is UPF0246 protein YaaA.